A 435-amino-acid polypeptide reads, in one-letter code: Putative F-box/FBD/LRR-repeat protein At5g56810 (435 aa).

The 49-residue stretch at 14–62 (PDRISQLPNDLLFRILSLIPVSDAMSTSLLSKRWKSVWKMLPTLVYNEN) folds into the F-box domain. 6 LRR repeats span residues 64-95 (CSNIGSLGFDQFCGRSLQLHEAPLLKTLTLEL), 146-173 (LKLQGNICLDVVDSPVCFQSLKSLYLTC), 174-199 (VNFENEESFSKLLSACPVLEDLFLQR), 222-248 (KEQAYYSNDEAILEITAPSLKHLNIFD), 266-291 (SVRVKLSKNEKLPKVLTSVEHLSLDL), and 316-341 (YDNFQSNLLLSLLKDLPNLQSLKLNH). The 52-residue stretch at 353–404 (CSVSEPSSVPECLSFHLETFQWIGYAGTFEEIAAAVYVLKNARCLKNATISL) folds into the FBD domain.

The sequence is that of Putative F-box/FBD/LRR-repeat protein At5g56810 from Arabidopsis thaliana (Mouse-ear cress).